A 277-amino-acid polypeptide reads, in one-letter code: Large ribosomal subunit protein uL2c (277 aa).

Polar residues predominate over residues methionine 1–proline 11. Disordered stretches follow at residues methionine 1–serine 47 and tyrosine 254–lysine 277.

This sequence belongs to the universal ribosomal protein uL2 family. Part of the 50S ribosomal subunit.

The protein resides in the plastid. It localises to the chloroplast. The sequence is that of Large ribosomal subunit protein uL2c (rpl2) from Cryptomeria japonica (Japanese cedar).